We begin with the raw amino-acid sequence, 1117 residues long: Isoleucine--tRNA ligase (1117 aa).

Positions 64–74 (PFANGLPHYGH) match the 'HIGH' region motif. The 'KMSKS' region motif lies at 647-651 (KLSKR). K650 provides a ligand contact to ATP.

The protein belongs to the class-I aminoacyl-tRNA synthetase family. IleS type 2 subfamily. Monomer. Requires Zn(2+) as cofactor.

It is found in the cytoplasm. The catalysed reaction is tRNA(Ile) + L-isoleucine + ATP = L-isoleucyl-tRNA(Ile) + AMP + diphosphate. In terms of biological role, catalyzes the attachment of isoleucine to tRNA(Ile). As IleRS can inadvertently accommodate and process structurally similar amino acids such as valine, to avoid such errors it has two additional distinct tRNA(Ile)-dependent editing activities. One activity is designated as 'pretransfer' editing and involves the hydrolysis of activated Val-AMP. The other activity is designated 'posttransfer' editing and involves deacylation of mischarged Val-tRNA(Ile). This chain is Isoleucine--tRNA ligase, found in Ehrlichia ruminantium (strain Welgevonden).